The chain runs to 498 residues: Acetyl-coenzyme A carboxylase carboxyl transferase subunit beta, chloroplastic (498 aa).

A disordered region spans residues 36–59 (SVNEDPIINDMDKDIPSGSDSDNS). In terms of domain architecture, CoA carboxyltransferase N-terminal spans 231-498 (LWVQCENCYG…FFPLNQNSIK (268 aa)). Zn(2+) is bound by residues Cys-235, Cys-238, Cys-254, and Cys-257. Residues 235 to 257 (CENCYGLNYKRFLKSKMNICEHC) form a C4-type zinc finger.

It belongs to the AccD/PCCB family. Acetyl-CoA carboxylase is a heterohexamer composed of biotin carboxyl carrier protein, biotin carboxylase and 2 subunits each of ACCase subunit alpha and ACCase plastid-coded subunit beta (accD). It depends on Zn(2+) as a cofactor.

It is found in the plastid. The protein localises to the chloroplast stroma. The catalysed reaction is N(6)-carboxybiotinyl-L-lysyl-[protein] + acetyl-CoA = N(6)-biotinyl-L-lysyl-[protein] + malonyl-CoA. Its pathway is lipid metabolism; malonyl-CoA biosynthesis; malonyl-CoA from acetyl-CoA: step 1/1. Component of the acetyl coenzyme A carboxylase (ACC) complex. Biotin carboxylase (BC) catalyzes the carboxylation of biotin on its carrier protein (BCCP) and then the CO(2) group is transferred by the transcarboxylase to acetyl-CoA to form malonyl-CoA. The protein is Acetyl-coenzyme A carboxylase carboxyl transferase subunit beta, chloroplastic of Morus indica (Mulberry).